The primary structure comprises 216 residues: 3-keto-L-gulonate-6-phosphate decarboxylase UlaD (216 aa).

A substrate-binding site is contributed by D11. Mg(2+) is bound by residues E33 and D62. R192 lines the substrate pocket.

It belongs to the HPS/KGPDC family. KGPDC subfamily. As to quaternary structure, homodimer. Mg(2+) serves as cofactor.

The enzyme catalyses 3-dehydro-L-gulonate 6-phosphate + H(+) = L-xylulose 5-phosphate + CO2. It functions in the pathway cofactor degradation; L-ascorbate degradation; D-xylulose 5-phosphate from L-ascorbate: step 2/4. Functionally, catalyzes the decarboxylation of 3-keto-L-gulonate-6-P into L-xylulose-5-P. Is involved in the anaerobic L-ascorbate utilization. This is 3-keto-L-gulonate-6-phosphate decarboxylase UlaD from Escherichia coli O17:K52:H18 (strain UMN026 / ExPEC).